A 157-amino-acid polypeptide reads, in one-letter code: MPKLMEAGLSAKGKTFALIASRFNDFITDRLVSGAVDALVRNGAADKDIHLVKVPGAFEIPLLAKKMAEKGEYDAIVCLGAVIRGSTPHFDYVCAEVSKGIAQVSLEFSVPVIFGIVTTDTIEQAIERAGTKAGNKGWNAAVSAVEMANLMEVVTRA.

Residues Phe23, 57–59 (AFE), and 81–83 (AVI) contribute to the 5-amino-6-(D-ribitylamino)uracil site. 86–87 (ST) contacts (2S)-2-hydroxy-3-oxobutyl phosphate. His89 acts as the Proton donor in catalysis. Residue Phe114 participates in 5-amino-6-(D-ribitylamino)uracil binding. Position 128 (Arg128) interacts with (2S)-2-hydroxy-3-oxobutyl phosphate.

The protein belongs to the DMRL synthase family.

It carries out the reaction (2S)-2-hydroxy-3-oxobutyl phosphate + 5-amino-6-(D-ribitylamino)uracil = 6,7-dimethyl-8-(1-D-ribityl)lumazine + phosphate + 2 H2O + H(+). It functions in the pathway cofactor biosynthesis; riboflavin biosynthesis; riboflavin from 2-hydroxy-3-oxobutyl phosphate and 5-amino-6-(D-ribitylamino)uracil: step 1/2. Functionally, catalyzes the formation of 6,7-dimethyl-8-ribityllumazine by condensation of 5-amino-6-(D-ribitylamino)uracil with 3,4-dihydroxy-2-butanone 4-phosphate. This is the penultimate step in the biosynthesis of riboflavin. In Desulfosudis oleivorans (strain DSM 6200 / JCM 39069 / Hxd3) (Desulfococcus oleovorans), this protein is 6,7-dimethyl-8-ribityllumazine synthase.